Reading from the N-terminus, the 170-residue chain is Prenyl-diphosphate phosphatase (170 aa).

The Nudix hydrolase domain occupies 25 to 155 (HIHRASQLIL…PGNYTPALRE (131 aa)). The Nudix box signature appears at 59-83 (YSVSGTVADESYEACIAREMLEEIG). Residues glutamate 77 and glutamate 81 each coordinate Mg(2+).

It belongs to the Nudix hydrolase family. It depends on Mg(2+) as a cofactor.

It carries out the reaction dimethylallyl diphosphate + H2O = dimethylallyl phosphate + phosphate + H(+). It catalyses the reaction isopentenyl diphosphate + H2O = isopentenyl phosphate + phosphate + H(+). The enzyme catalyses (2E,6E)-farnesyl diphosphate + H2O = (2E,6E)-farnesyl phosphate + phosphate + H(+). The catalysed reaction is (2E)-geranyl diphosphate + H2O = (2E)-geranyl phosphate + phosphate + H(+). The protein operates within isoprenoid biosynthesis. Its function is as follows. Hydrolyzes homoallylic isopentenyl diphosphate (IPP), its allylic isomer dimethylallyl diphosphate (DMAPP) and short-chain prenyl diphosphates geranyl diphosphate (GPP) and farnesyl diphosphate (FPP) to their corresponding monophosphate forms with high activity. The preferred substrate is IPP. ADP, NADPH, Ap5A and thiamine diphosphate (TPP) are weakly hydrolyzed. No hydrolysis with ATP, dNTPs, 8-OH-dGTP, NAD+, FAD or acetyl-CoA. The likely physiological role of this enzyme is to provide a substrate dimethylallyl phosphate (DMAP) for prenylated flavin mononucleotide (prenyl-FMN) synthase MM_1871 involved in the biosynthesis of prenyl-FMN, a coenzyme required in the archaea-specific mevalonate pathway. This Methanosarcina mazei (strain ATCC BAA-159 / DSM 3647 / Goe1 / Go1 / JCM 11833 / OCM 88) (Methanosarcina frisia) protein is Prenyl-diphosphate phosphatase.